A 579-amino-acid polypeptide reads, in one-letter code: Glutamate--tRNA ligase (579 aa).

Residues 114–124 (PNPNGPWHIGH) carry the 'HIGH' region motif.

The protein belongs to the class-I aminoacyl-tRNA synthetase family. Glutamate--tRNA ligase type 2 subfamily.

Its subcellular location is the cytoplasm. The enzyme catalyses tRNA(Glu) + L-glutamate + ATP = L-glutamyl-tRNA(Glu) + AMP + diphosphate. Its function is as follows. Catalyzes the attachment of glutamate to tRNA(Glu) in a two-step reaction: glutamate is first activated by ATP to form Glu-AMP and then transferred to the acceptor end of tRNA(Glu). In Haloarcula marismortui (strain ATCC 43049 / DSM 3752 / JCM 8966 / VKM B-1809) (Halobacterium marismortui), this protein is Glutamate--tRNA ligase.